The chain runs to 213 residues: Redox-sensing transcriptional repressor Rex (213 aa).

The segment at residues 18 to 57 (LYYRFVNTLKSKGIDRVNSKAISEGLNIDSATIRRDFSYF) is a DNA-binding region (H-T-H motif). 92–97 (GVGNLG) lines the NAD(+) pocket.

The protein belongs to the transcriptional regulatory Rex family. In terms of assembly, homodimer.

The protein localises to the cytoplasm. Functionally, modulates transcription in response to changes in cellular NADH/NAD(+) redox state. The protein is Redox-sensing transcriptional repressor Rex of Staphylococcus saprophyticus subsp. saprophyticus (strain ATCC 15305 / DSM 20229 / NCIMB 8711 / NCTC 7292 / S-41).